A 213-amino-acid polypeptide reads, in one-letter code: Uridine kinase (213 aa).

ATP is bound at residue 13 to 20 (GASASGKS).

Belongs to the uridine kinase family.

The protein localises to the cytoplasm. It carries out the reaction uridine + ATP = UMP + ADP + H(+). The enzyme catalyses cytidine + ATP = CMP + ADP + H(+). It functions in the pathway pyrimidine metabolism; CTP biosynthesis via salvage pathway; CTP from cytidine: step 1/3. The protein operates within pyrimidine metabolism; UMP biosynthesis via salvage pathway; UMP from uridine: step 1/1. The polypeptide is Uridine kinase (Histophilus somni (strain 129Pt) (Haemophilus somnus)).